Reading from the N-terminus, the 526-residue chain is Tyrosine 2,3-aminomutase (526 aa).

Catalysis depends on Tyr41, which acts as the Proton donor/acceptor. Substrate is bound at residue His71. The 5-imidazolinone (Ala-Gly) cross-link spans 130 to 132 (ASG). Ser131 is modified (2,3-didehydroalanine (Ser)). Residues Asn183 and Arg288 each coordinate substrate.

This sequence belongs to the TAL/TAM family. As to quaternary structure, homotetramer; dimer of dimers. Post-translationally, contains an active site 4-methylidene-imidazol-5-one (MIO), which is formed autocatalytically by cyclization and dehydration of residues Ala-Ser-Gly.

The catalysed reaction is L-tyrosine = 3-amino-3-(4-hydroxyphenyl)propanoate. It catalyses the reaction L-tyrosine = (E)-4-coumarate + NH4(+). In terms of biological role, has aminomutase and, to a much lesser extent, ammonia-lyase activity. Primarily, catalyzes the rearrangement of L-tyrosine to S-beta-tyrosine, which is probably incorporated into secondary metabolite myxovalargin. The aminomutase activity exclusively produces S-beta-tyrosine. The sequence is that of Tyrosine 2,3-aminomutase from Myxococcus fulvus.